The sequence spans 167 residues: Transmembrane protein 229B (167 aa).

Topologically, residues 1–14 (MAAAEPLTAFSRWY) are cytoplasmic. A helical membrane pass occupies residues 15-35 (LYAIHGYFCEVMFTAAWEFVV). The Extracellular segment spans residues 36–40 (NFNWK). The helical transmembrane segment at 41–61 (FPGVTSVWALFIYGTSILIVE) threads the bilayer. Residues 62–72 (KMYLYLKDKCH) are Cytoplasmic-facing. The helical transmembrane segment at 73-93 (ILVRCFIYTLWTYLWEFTTGL) threads the bilayer. At 94-109 (ILRQFNACPWDYSQFD) the chain is on the extracellular side. Residues 110 to 130 (FDFMGLITLEYAIPWFCASFI) traverse the membrane as a helical segment. Topologically, residues 131-167 (MEQLVIRNTLRLRFDETAEPGAPTVPVALANGHVKTD) are cytoplasmic.

Belongs to the TMEM229 family.

Its subcellular location is the membrane. The chain is Transmembrane protein 229B (TMEM229B) from Gallus gallus (Chicken).